Reading from the N-terminus, the 338-residue chain is Lipoate-protein ligase A (338 aa).

Residues 29–216 (PATQRVLFLW…AFFAHYGERV (188 aa)) form the BPL/LPL catalytic domain. ATP contacts are provided by residues Arg-71, 76-79 (GAVF), and Lys-134. Lys-134 is a (R)-lipoate binding site.

The protein belongs to the LplA family. Monomer.

The protein localises to the cytoplasm. It catalyses the reaction L-lysyl-[lipoyl-carrier protein] + (R)-lipoate + ATP = N(6)-[(R)-lipoyl]-L-lysyl-[lipoyl-carrier protein] + AMP + diphosphate + H(+). It participates in protein modification; protein lipoylation via exogenous pathway; protein N(6)-(lipoyl)lysine from lipoate: step 1/2. Its pathway is protein modification; protein lipoylation via exogenous pathway; protein N(6)-(lipoyl)lysine from lipoate: step 2/2. Catalyzes both the ATP-dependent activation of exogenously supplied lipoate to lipoyl-AMP and the transfer of the activated lipoyl onto the lipoyl domains of lipoate-dependent enzymes. This is Lipoate-protein ligase A from Escherichia coli (strain K12 / MC4100 / BW2952).